The chain runs to 224 residues: Ribosomal RNA large subunit methyltransferase E (224 aa).

S-adenosyl-L-methionine is bound by residues glycine 64, tryptophan 66, aspartate 97, aspartate 113, and aspartate 138. Lysine 178 serves as the catalytic Proton acceptor.

It belongs to the class I-like SAM-binding methyltransferase superfamily. RNA methyltransferase RlmE family.

It is found in the cytoplasm. It catalyses the reaction uridine(2552) in 23S rRNA + S-adenosyl-L-methionine = 2'-O-methyluridine(2552) in 23S rRNA + S-adenosyl-L-homocysteine + H(+). In terms of biological role, specifically methylates the uridine in position 2552 of 23S rRNA at the 2'-O position of the ribose in the fully assembled 50S ribosomal subunit. The protein is Ribosomal RNA large subunit methyltransferase E of Albidiferax ferrireducens (strain ATCC BAA-621 / DSM 15236 / T118) (Rhodoferax ferrireducens).